The primary structure comprises 596 residues: Neuroepithelial cell-transforming gene 1 protein (596 aa).

Position 1 is an N-acetylmethionine (M1). A disordered region spans residues 1 to 44 (MEPELAAQKQPRPRRRSRRASGLSTEGATGPSADTSGSELDGRC). The necessary for nuclear localization stretch occupies residues 1–74 (MEPELAAQKQ…LKRKRREKDD (74 aa)). The short motif at 12-19 (RPRRRSRR) is the Nuclear localization signal element. S21 and S32 each carry phosphoserine. Residues 22–38 (GLSTEGATGPSADTSGS) show a composition bias toward polar residues. The Nuclear localization signal signature appears at 66 to 72 (KRKRREK). Residues S100, S106, and S122 each carry the phosphoserine modification. The segment at 127–146 (GDHRSPASAQKFSSRSTVPT) is disordered. A compositionally biased stretch (polar residues) spans 133-145 (ASAQKFSSRSTVP). The 183-residue stretch at 174–356 (RRQEAIYEMS…QGVLSDINLK (183 aa)) folds into the DH domain. Residues 386-501 (VLLCHGELRS…WFNCIRAAIA (116 aa)) enclose the PH domain. S508 is subject to Phosphoserine. Residues 562 to 596 (MAEDSKSLKTHQTQPGIRRARDKALSGGKRKETLV) are disordered.

In terms of assembly, interacts with RHOA in its GTP- and GDP-bound states, and with CDC42 in its GTP-bound state. Interacts with the PDZ 1 domain of BAIAP1. Widely expressed.

Its subcellular location is the cytoplasm. The protein localises to the nucleus. Acts as a guanine nucleotide exchange factor (GEF) for RhoA GTPase. May be involved in activation of the SAPK/JNK pathway Stimulates genotoxic stress-induced RHOB activity in breast cancer cells leading to their cell death. This chain is Neuroepithelial cell-transforming gene 1 protein (NET1), found in Homo sapiens (Human).